A 150-amino-acid chain; its full sequence is Small ribosomal subunit protein uS15 (150 aa).

Residues 1–10 (MPHRSRHKRG) show a composition bias toward basic residues. The segment at 1–21 (MPHRSRHKRGSSGSVRPATKT) is disordered.

This sequence belongs to the universal ribosomal protein uS15 family. As to quaternary structure, part of the 30S ribosomal subunit.

The protein is Small ribosomal subunit protein uS15 of Caldivirga maquilingensis (strain ATCC 700844 / DSM 13496 / JCM 10307 / IC-167).